Here is a 364-residue protein sequence, read N- to C-terminus: MDFVRGFWRKHRRKVLVTAGCLGSGYLLYKLYNSHTRRLADLERELAHERENDEIIKTQMKAHFESIQMIVDSTTLPHAMQFLSIRISEEIDVSHVMDRLNQGKGMLSPPEKLQLWDELKILSFTRMVLSLWSVTMLSLYIRVQVNILGRHLYVDTARALGSSHLLEEVDLIDRDDEQKFLSSADFLVTNAMPSLISDMQGSAEEVLKGKQLKDVITTRVLQETVMQIVDVFMSTGSPHHWVDYLMMPQDTKLSRTTSDSSDEAVSKFHQLMVETREVLISTEFTNIVEISLKCFTDVLVEEMETQTEAGGLATGKPLAKVLPQIEKTMNVITAEPSKNRFLQIIRDLPEVKLFFTLLYANMPQ.

Residues 15 to 32 (VLVTAGCLGSGYLLYKLY) traverse the membrane as a helical segment. Residues 33 to 62 (NSHTRRLADLERELAHERENDEIIKTQMKA) are a coiled coil.

This sequence belongs to the peroxin-3 family.

It is found in the peroxisome membrane. Involved in morphology determination of peroxisomes, but not in import of peroxisomal matrix proteins. May act as a docking factor for PEX19 and be necessary for the import of peroxisomal membrane proteins in the peroxisomes. This chain is Peroxisome biogenesis protein 3-2 (PEX3-2), found in Arabidopsis thaliana (Mouse-ear cress).